We begin with the raw amino-acid sequence, 215 residues long: Ras-related protein RAB1BV (215 aa).

GTP contacts are provided by residues 22–29 (GDSGVGKS), 70–74 (DTAGQ), and 128–131 (NKAD). The disordered stretch occupies residues 183 to 215 (DSDTRQEAQPSITIKPADQSGNQAAAKSACCGS). S-geranylgeranyl cysteine attachment occurs at residues cysteine 212 and cysteine 213.

The protein belongs to the small GTPase superfamily. Rab family.

It localises to the cell membrane. This Beta vulgaris (Sugar beet) protein is Ras-related protein RAB1BV (RAB1BV).